Here is an 814-residue protein sequence, read N- to C-terminus: Putative serine/threonine-protein kinase-like protein CCR3 (814 aa).

The first 30 residues, 1 to 30 (MKRFINSTVTFSVTVTIAVIIFFLLSPVTS), serve as a signal peptide directing secretion. N6, N68, N136, N215, N226, N251, N260, N275, N299, and N309 each carry an N-linked (GlcNAc...) asparagine glycan. The Extracellular portion of the chain corresponds to 31 to 393 (LGSGSTYAVV…SSPPSKALTR (363 aa)). Residues 366–381 (SQFPLPPPPPPPPPSP) are compositionally biased toward pro residues. The interval 366–388 (SQFPLPPPPPPPPPSPSTSSPPS) is disordered. Residues 394-414 (GLLAFAIVGSVGAFAGICSVV) traverse the membrane as a helical segment. Topologically, residues 415–814 (YCLWTGVCLG…SSGICSIVSD (400 aa)) are cytoplasmic. Residues 433-478 (QPTITRGGSNSRSNSSNSRSLSIRRQGSRMLSMRRQRSGTSSMKHA) form a disordered region. Positions 441–457 (SNSRSNSSNSRSLSIRR) are enriched in low complexity. The Protein kinase domain maps to 496–794 (FSLENKIGSG…DIVGNLERAL (299 aa)). Residues 502–510 (IGSGSFGVV) and K524 each bind ATP. The active-site Proton acceptor is the D631.

The protein belongs to the protein kinase superfamily. Ser/Thr protein kinase family. Homodimer. As to expression, expressed in roots, leaves, shoot apical meristems (SAM), and floral buds.

It localises to the membrane. It catalyses the reaction L-seryl-[protein] + ATP = O-phospho-L-seryl-[protein] + ADP + H(+). The catalysed reaction is L-threonyl-[protein] + ATP = O-phospho-L-threonyl-[protein] + ADP + H(+). Functionally, serine/threonine-protein kinase. This is Putative serine/threonine-protein kinase-like protein CCR3 (CCR3) from Arabidopsis thaliana (Mouse-ear cress).